The sequence spans 486 residues: Ty transcription activator TEC1 (486 aa).

Serine 2 is subject to N-acetylserine. The segment at residues 125-199 (WTIGCDKWSE…QVWKKTIQNK (75 aa)) is a DNA-binding region (TEA). Serine 325 carries the phosphoserine modification. Disordered regions lie at residues 372-410 (EHES…SRPV) and 465-486 (HYEH…GNFY). The span at 377 to 388 (PEFSSNSNSGSE) shows a compositional bias: low complexity. The segment covering 472–486 (QRNFTPSNQSHGNFY) has biased composition (polar residues).

The protein belongs to the TEC1 family.

It localises to the nucleus. In terms of biological role, TEC1 is involved in the activation of TY1 and TY1-mediated gene expression. It is not involved in mating or sporulation processes. The polypeptide is Ty transcription activator TEC1 (TEC1) (Saccharomyces cerevisiae (strain ATCC 204508 / S288c) (Baker's yeast)).